We begin with the raw amino-acid sequence, 199 residues long: Recombination protein RecR (199 aa).

Residues 57-72 (CQSCRTYTEETLCPIC) form a C4-type zinc finger. Residues 81–176 (STICVVETPA…MISRIAHGVP (96 aa)) form the Toprim domain.

Belongs to the RecR family.

Functionally, may play a role in DNA repair. It seems to be involved in an RecBC-independent recombinational process of DNA repair. It may act with RecF and RecO. This chain is Recombination protein RecR, found in Shewanella baltica (strain OS155 / ATCC BAA-1091).